The primary structure comprises 252 residues: Vitamin B12 import ATP-binding protein BtuD (252 aa).

The 236-residue stretch at 2–237 (IQIKSLSVGA…EQLESVFNTQ (236 aa)) folds into the ABC transporter domain. ATP is bound at residue 30–37 (GPNGSGKS).

This sequence belongs to the ABC transporter superfamily. Vitamin B12 importer (TC 3.A.1.13.1) family. As to quaternary structure, the complex is composed of two ATP-binding proteins (BtuD), two transmembrane proteins (BtuC) and a solute-binding protein (BtuF).

The protein resides in the cell inner membrane. It catalyses the reaction an R-cob(III)alamin(out) + ATP + H2O = an R-cob(III)alamin(in) + ADP + phosphate + H(+). Its function is as follows. Part of the ABC transporter complex BtuCDF involved in vitamin B12 import. Responsible for energy coupling to the transport system. The sequence is that of Vitamin B12 import ATP-binding protein BtuD from Vibrio atlanticus (strain LGP32) (Vibrio splendidus (strain Mel32)).